The following is a 459-amino-acid chain: Bifunctional protein GlmU (459 aa).

Residues 1-230 (MSNRFAVILA…FDETLGVNDR (230 aa)) form a pyrophosphorylase region. UDP-N-acetyl-alpha-D-glucosamine contacts are provided by residues 9-12 (LAAG), K23, Q73, and 78-79 (GT). A Mg(2+)-binding site is contributed by D103. G140, E155, N170, and N228 together coordinate UDP-N-acetyl-alpha-D-glucosamine. Residue N228 participates in Mg(2+) binding. Residues 231 to 251 (VALSQAEIIMKNRINRKNMVN) are linker. Residues 252-459 (GVTIIDPSNT…VDQLLNKKKS (208 aa)) form an N-acetyltransferase region. Residues R333 and K351 each contribute to the UDP-N-acetyl-alpha-D-glucosamine site. The active-site Proton acceptor is the H363. 2 residues coordinate UDP-N-acetyl-alpha-D-glucosamine: Y366 and N377. Residues 386–387 (NY), A423, and R440 contribute to the acetyl-CoA site.

It in the N-terminal section; belongs to the N-acetylglucosamine-1-phosphate uridyltransferase family. This sequence in the C-terminal section; belongs to the transferase hexapeptide repeat family. In terms of assembly, homotrimer. Requires Mg(2+) as cofactor.

It localises to the cytoplasm. The enzyme catalyses alpha-D-glucosamine 1-phosphate + acetyl-CoA = N-acetyl-alpha-D-glucosamine 1-phosphate + CoA + H(+). It carries out the reaction N-acetyl-alpha-D-glucosamine 1-phosphate + UTP + H(+) = UDP-N-acetyl-alpha-D-glucosamine + diphosphate. It participates in nucleotide-sugar biosynthesis; UDP-N-acetyl-alpha-D-glucosamine biosynthesis; N-acetyl-alpha-D-glucosamine 1-phosphate from alpha-D-glucosamine 6-phosphate (route II): step 2/2. Its pathway is nucleotide-sugar biosynthesis; UDP-N-acetyl-alpha-D-glucosamine biosynthesis; UDP-N-acetyl-alpha-D-glucosamine from N-acetyl-alpha-D-glucosamine 1-phosphate: step 1/1. It functions in the pathway bacterial outer membrane biogenesis; LPS lipid A biosynthesis. In terms of biological role, catalyzes the last two sequential reactions in the de novo biosynthetic pathway for UDP-N-acetylglucosamine (UDP-GlcNAc). The C-terminal domain catalyzes the transfer of acetyl group from acetyl coenzyme A to glucosamine-1-phosphate (GlcN-1-P) to produce N-acetylglucosamine-1-phosphate (GlcNAc-1-P), which is converted into UDP-GlcNAc by the transfer of uridine 5-monophosphate (from uridine 5-triphosphate), a reaction catalyzed by the N-terminal domain. The sequence is that of Bifunctional protein GlmU from Bacillus anthracis (strain A0248).